The primary structure comprises 177 residues: B-phycoerythrin beta chain (177 aa).

Phycourobilin contacts are provided by Cys-50 and Cys-61. Residue Asn-72 is modified to N4-methylasparagine. The (2R,3E)-phycoerythrobilin site is built by Cys-82 and Cys-158.

Belongs to the phycobiliprotein family. As to quaternary structure, heteromer of 6 alpha, 6 beta and one gamma chain. Post-translationally, contains two covalently linked phycoerythrobilin chromophores and one covalently linked phycourobilin chromophore.

Its subcellular location is the plastid. The protein localises to the chloroplast thylakoid membrane. In terms of biological role, light-harvesting photosynthetic bile pigment-protein from the phycobiliprotein complex. The sequence is that of B-phycoerythrin beta chain (cpeB) from Rhodella violacea (Red alga).